A 390-amino-acid chain; its full sequence is Putative nickel insertion protein (390 aa).

The protein belongs to the LarC family.

In Myxococcus xanthus (strain DK1622), this protein is Putative nickel insertion protein.